A 309-amino-acid chain; its full sequence is Olfactory receptor 1A2 (309 aa).

Topologically, residues 1-25 (MKKENQSFNLDFILLGVTSQQEQNN) are extracellular. Asparagine 5 carries N-linked (GlcNAc...) asparagine glycosylation. The helical transmembrane segment at 26-49 (VFFVIFLCIYPITLTGNLLIILAI) threads the bilayer. The Cytoplasmic segment spans residues 50-57 (CADIRLHN). A helical membrane pass occupies residues 58-79 (PMYFLLANLSLVDIIFSSVTIP). Topologically, residues 80-100 (KVLANHLLGSKFISFGGCLMQ) are extracellular. The cysteines at positions 97 and 189 are disulfide-linked. The chain crosses the membrane as a helical span at residues 101-120 (MYFMIALAKADSYTLAAMAY). The Cytoplasmic portion of the chain corresponds to 121–139 (DRAVAISCPLHYTTIMSPR). A helical membrane pass occupies residues 140–158 (SCILLIAGSWVIGNTSALP). Residues 159-195 (HTLLTASLSFCGNQEVANFYCDIMPLLKLSCSDVHFN) lie on the Extracellular side of the membrane. The helical transmembrane segment at 196–218 (VKMMYLGVGVFSLPLLCIIVSYV) threads the bilayer. The Cytoplasmic segment spans residues 219 to 235 (QVFSTVFQVPSTKSLFK). The chain crosses the membrane as a helical span at residues 236-258 (AFCTCGSHLTVVFLYYGTTMGMY). Topologically, residues 259 to 270 (FRPLTSYSPKDA) are extracellular. The helical transmembrane segment at 271 to 290 (VITVMYVAVTPALNPFIYSL) threads the bilayer. At 291–309 (RNWDMKAALQKLFSKRISS) the chain is on the cytoplasmic side.

It belongs to the G-protein coupled receptor 1 family.

The protein resides in the cell membrane. Odorant receptor. The protein is Olfactory receptor 1A2 (OR1A2) of Homo sapiens (Human).